Consider the following 417-residue polypeptide: Ig-like V-type domain-containing protein FAM187A (417 aa).

Positions 1–18 (MSLAHTTVLLWAWGSLQA) are cleaved as a signal peptide. The Extracellular portion of the chain corresponds to 19 to 377 (FEIVEKESVF…ASLSDPETRT (359 aa)). N248 and N318 each carry an N-linked (GlcNAc...) asparagine glycan. One can recognise an Ig-like V-type domain in the interval 268–362 (PWVPQVPIQF…IAGFRLGVIT (95 aa)). C290 and C346 are joined by a disulfide. The helical transmembrane segment at 378–398 (AIELTLMGYLLITIFFITIHL) threads the bilayer. Over 399 to 417 (CRCCCQSRCCPNFSAQTLL) the chain is Cytoplasmic.

This sequence belongs to the FAM187 family.

The protein localises to the membrane. In Mus musculus (Mouse), this protein is Ig-like V-type domain-containing protein FAM187A (Fam187a).